The following is a 327-amino-acid chain: Microtubule-associated protein RP/EB family member 2 (327 aa).

Residues 1–17 are compositionally biased toward polar residues; it reads MPGPTQTLSPNGENNND. The segment at 1–20 is disordered; that stretch reads MPGPTQTLSPNGENNNDVIH. Positions 56 to 158 constitute a Calponin-homology (CH) domain; that stretch reads TMSRHDIIAW…FIQWFKKFFD (103 aa). Disordered stretches follow at residues 170-238 and 295-327; these read EARQ…DKDL and LYSS…QEEY. One can recognise an EB1 C-terminal domain in the interval 234–304; that stretch reads SDKDLETQVS…LYSSEEQESH (71 aa).

The protein belongs to the MAPRE family.

The protein resides in the cytoplasm. It localises to the cytoskeleton. Functionally, may be involved in microtubule polymerization, and spindle function by stabilizing microtubules and anchoring them at centrosomes. The protein is Microtubule-associated protein RP/EB family member 2 (mapre2) of Xenopus laevis (African clawed frog).